Reading from the N-terminus, the 58-residue chain is Metallothionein-1 (58 aa).

The interval 1-28 is beta; sequence PGPCCKDKCECAEGGCKTGCKCTSCRCA. A divalent metal cation is bound by residues cysteine 4, cysteine 5, cysteine 9, cysteine 11, cysteine 16, cysteine 20, cysteine 22, cysteine 25, cysteine 27, cysteine 30, cysteine 33, cysteine 37, cysteine 39, cysteine 45, cysteine 49, cysteine 53, cysteine 55, and cysteine 56. Positions 29 to 58 are alpha; that stretch reads PCEKCTSGCKCPSKDECAKTCSKPCSCCXX.

It belongs to the metallothionein superfamily. Type 3 family.

In terms of biological role, metallothioneins have a high content of cysteine residues that bind various heavy metals. The different forms of lobster metallothioneins may have different biological functions. Class I MTS in marine crustacea are involved in the sequestration of elevated levels of heavy-metal ions. Binds 6 metal ions. Known to bind cadmium. This chain is Metallothionein-1, found in Homarus americanus (American lobster).